Consider the following 477-residue polypeptide: Glycogen synthase (477 aa).

Position 15 (K15) interacts with ADP-alpha-D-glucose.

Belongs to the glycosyltransferase 1 family. Bacterial/plant glycogen synthase subfamily.

The catalysed reaction is [(1-&gt;4)-alpha-D-glucosyl](n) + ADP-alpha-D-glucose = [(1-&gt;4)-alpha-D-glucosyl](n+1) + ADP + H(+). Its pathway is glycan biosynthesis; glycogen biosynthesis. Synthesizes alpha-1,4-glucan chains using ADP-glucose. This is Glycogen synthase from Streptococcus pneumoniae serotype 2 (strain D39 / NCTC 7466).